The sequence spans 638 residues: 1-deoxy-D-xylulose-5-phosphate synthase (638 aa).

Thiamine diphosphate contacts are provided by residues histidine 71 and 112-114 (SHA). Aspartate 144 contributes to the Mg(2+) binding site. Residues 145-146 (GA), asparagine 173, tyrosine 284, and glutamate 365 each bind thiamine diphosphate. Asparagine 173 lines the Mg(2+) pocket.

Belongs to the transketolase family. DXPS subfamily. As to quaternary structure, homodimer. Requires Mg(2+) as cofactor. Thiamine diphosphate is required as a cofactor.

It carries out the reaction D-glyceraldehyde 3-phosphate + pyruvate + H(+) = 1-deoxy-D-xylulose 5-phosphate + CO2. It functions in the pathway metabolic intermediate biosynthesis; 1-deoxy-D-xylulose 5-phosphate biosynthesis; 1-deoxy-D-xylulose 5-phosphate from D-glyceraldehyde 3-phosphate and pyruvate: step 1/1. Functionally, catalyzes the acyloin condensation reaction between C atoms 2 and 3 of pyruvate and glyceraldehyde 3-phosphate to yield 1-deoxy-D-xylulose-5-phosphate (DXP). This chain is 1-deoxy-D-xylulose-5-phosphate synthase, found in Mycobacterium bovis (strain ATCC BAA-935 / AF2122/97).